We begin with the raw amino-acid sequence, 322 residues long: NADH-cytochrome b5 reductase 2 (322 aa).

Residues 30–46 (LAPVYVAVGLAGLGVGL) traverse the membrane as a helical segment. Positions 71-176 (QGWVNLKLSD…KGPLPKYPWE (106 aa)) constitute an FAD-binding FR-type domain. 179-214 (KHKHICLVAGGTGITPMYQLAREIFKNPEDKTKVTL) contacts FAD.

The protein belongs to the flavoprotein pyridine nucleotide cytochrome reductase family. It depends on FAD as a cofactor.

The protein localises to the mitochondrion outer membrane. It carries out the reaction 2 Fe(III)-[cytochrome b5] + NADH = 2 Fe(II)-[cytochrome b5] + NAD(+) + H(+). Functionally, may mediate the reduction of outer membrane cytochrome b5. This chain is NADH-cytochrome b5 reductase 2 (mcr1), found in Emericella nidulans (strain FGSC A4 / ATCC 38163 / CBS 112.46 / NRRL 194 / M139) (Aspergillus nidulans).